The following is a 70-amino-acid chain: Large ribosomal subunit protein bL32c (70 aa).

Disordered regions lie at residues methionine 1–arginine 20 and asparagine 51–proline 70. A compositionally biased stretch (polar residues) spans aspartate 52–lysine 61.

It belongs to the bacterial ribosomal protein bL32 family.

Its subcellular location is the plastid. It is found in the chloroplast. The chain is Large ribosomal subunit protein bL32c (rpl32) from Pinus thunbergii (Japanese black pine).